The sequence spans 505 residues: Trans-cinnamate 4-monooxygenase (505 aa).

The chain crosses the membrane as a helical span at residues 3-23; it reads LLLLEKTLLGLFAAIIVASIV. Residues 213-218 and A306 each bind (E)-cinnamate; that span reads RSRLAQ. Position 447 (C447) interacts with heme.

It belongs to the cytochrome P450 family. Heme is required as a cofactor.

The protein localises to the membrane. The enzyme catalyses (E)-cinnamate + reduced [NADPH--hemoprotein reductase] + O2 = (E)-4-coumarate + oxidized [NADPH--hemoprotein reductase] + H2O + H(+). It functions in the pathway phenylpropanoid metabolism; trans-4-coumarate biosynthesis; trans-4-coumarate from trans-cinnamate: step 1/1. Catalyzes the first oxidative step of the phenylpropanoid pathway in higher plants by transforming trans-cinnamate into p-coumarate. The compounds formed by this pathway are essential components for lignification, pollination, and defense against ultraviolet light, predators and pathogens. The polypeptide is Trans-cinnamate 4-monooxygenase (CYP73A4) (Catharanthus roseus (Madagascar periwinkle)).